Consider the following 430-residue polypeptide: Adenylosuccinate synthetase (430 aa).

GTP-binding positions include 12 to 18 (GDEGKGK) and 40 to 42 (GHT). Asp-13 functions as the Proton acceptor in the catalytic mechanism. Residues Asp-13 and Gly-40 each coordinate Mg(2+). Residues 13 to 16 (DEGK), 38 to 41 (NAGH), Thr-130, Arg-144, Gln-224, Thr-239, and Arg-303 each bind IMP. His-41 acts as the Proton donor in catalysis. A substrate-binding site is contributed by 299–305 (TVTGRKR). Residues Arg-305, 331–333 (KLD), and 413–415 (STS) each bind GTP.

This sequence belongs to the adenylosuccinate synthetase family. Homodimer. Mg(2+) is required as a cofactor.

Its subcellular location is the cytoplasm. It catalyses the reaction IMP + L-aspartate + GTP = N(6)-(1,2-dicarboxyethyl)-AMP + GDP + phosphate + 2 H(+). Its pathway is purine metabolism; AMP biosynthesis via de novo pathway; AMP from IMP: step 1/2. In terms of biological role, plays an important role in the de novo pathway of purine nucleotide biosynthesis. Catalyzes the first committed step in the biosynthesis of AMP from IMP. The sequence is that of Adenylosuccinate synthetase from Parvibaculum lavamentivorans (strain DS-1 / DSM 13023 / NCIMB 13966).